A 144-amino-acid polypeptide reads, in one-letter code: Large ribosomal subunit protein uL11m (144 aa).

The N-terminal 32 residues, 1–32 (MASTRTTIIKLIVPAGKATPTPPIGPALGARG), are a transit peptide targeting the mitochondrion.

Belongs to the universal ribosomal protein uL11 family. As to quaternary structure, component of the mitochondrial large ribosomal subunit (mt-LSU). Mature yeast 74S mitochondrial ribosomes consist of a small (37S) and a large (54S) subunit. The 37S small subunit contains a 15S ribosomal RNA (15S mt-rRNA) and at least 32 different proteins. The 54S large subunit contains a 21S rRNA (21S mt-rRNA) and at least 45 different proteins.

The protein localises to the mitochondrion. It localises to the cytoplasm. Its function is as follows. Component of the mitochondrial ribosome (mitoribosome), a dedicated translation machinery responsible for the synthesis of mitochondrial genome-encoded proteins, including at least some of the essential transmembrane subunits of the mitochondrial respiratory chain. The mitoribosomes are attached to the mitochondrial inner membrane and translation products are cotranslationally integrated into the membrane. This Schizosaccharomyces pombe (strain 972 / ATCC 24843) (Fission yeast) protein is Large ribosomal subunit protein uL11m.